The chain runs to 236 residues: 2-C-methyl-D-erythritol 4-phosphate cytidylyltransferase (236 aa).

This sequence belongs to the IspD/TarI cytidylyltransferase family. IspD subfamily.

The enzyme catalyses 2-C-methyl-D-erythritol 4-phosphate + CTP + H(+) = 4-CDP-2-C-methyl-D-erythritol + diphosphate. It functions in the pathway isoprenoid biosynthesis; isopentenyl diphosphate biosynthesis via DXP pathway; isopentenyl diphosphate from 1-deoxy-D-xylulose 5-phosphate: step 2/6. In terms of biological role, catalyzes the formation of 4-diphosphocytidyl-2-C-methyl-D-erythritol from CTP and 2-C-methyl-D-erythritol 4-phosphate (MEP). The protein is 2-C-methyl-D-erythritol 4-phosphate cytidylyltransferase of Burkholderia orbicola (strain AU 1054).